The primary structure comprises 298 residues: Oligodendrocyte transcription factor 2 (298 aa).

Over residues 1–13 the composition is skewed to polar residues; sequence MDSDASLVSSRPS. Disordered stretches follow at residues 1-60 and 79-102; these read MDSD…SAEL and SSSS…MTEP. Over residues 26–41 the composition is skewed to gly residues; the sequence is NKGGGGGGGGGGGFTG. Residues 79-91 are compositionally biased toward low complexity; it reads SSSSSASSASSAS. Residues 106-160 form the bHLH domain; that stretch reads QLRLKINSRERKRMHDLNIAMDGLREVMPYAHGPSVRKLSKIATLLLARNYILML.

It is found in the nucleus. Functionally, required for oligodendrocyte and motor neuron specification in the spinal cord. The polypeptide is Oligodendrocyte transcription factor 2 (OLIG2) (Gallus gallus (Chicken)).